The following is a 552-amino-acid chain: Transcription factor kayak (552 aa).

Disordered stretches follow at residues L110 to T145 and G177 to V234. A compositionally biased stretch (polar residues) spans A111–Q127. Residues T135–T145 are compositionally biased toward low complexity. A compositionally biased stretch (polar residues) spans G177 to P192. The bZIP domain occupies E212–H275. Residues K214–R233 form a basic motif region. The tract at residues L240 to L247 is leucine-zipper. The segment covering A304–G325 has biased composition (low complexity). Disordered stretches follow at residues A304–L346, L365–P390, and G514–L552. Polar residues predominate over residues T333–P343. Phosphoserine is present on S342.

This sequence belongs to the bZIP family. Fos subfamily. In terms of assembly, homodimer. Heterodimer with Jra. The kay-Jra heterodimer binds more stably to the AP-1 site than either of the two proteins alone.

Its subcellular location is the nucleus. In terms of biological role, developmentally regulated transcription factor AP-1 binds and recognizes the enhancer DNA sequence: 5'-TGA[CG]TCA-3'. May play a role in the function or determination of a particular subset of cells in the developing embryo. It is able to carry out its function either independently of or in conjunction with Jra. The protein is Transcription factor kayak of Drosophila yakuba (Fruit fly).